The chain runs to 375 residues: MPGGKKVVPSGSSSASPNAAATTTAAAAAAAAAPHSGTKRLETTEGASAQRDEEPEEEGEEDLRDGGVPFFINRGGLPVDEATWERMWKHVAKIHPDGEKVALRIRGATDLPKIPIPSVPTFQPTTPVPERLEAVQRYIRELQYNHTGTQFFEIKKSRPLTGLMDLAKEMTKEALPIKCLEAVILGIYLTNSMPTLERFPISFKTYFSGNYFRHIVLGVNFGGRYGALGMSRREDLMYKPPAFRTLSELVLDYEAAYGRCWHVLKKVKLGQCVSHDPHSVEQIEWKHSVLDVERLGREDFRKELERHARDMRLKIGKGTGPPSPTKDRKKDVSSPQRAQSSPHRRNSRSERRPSGEKKPAEPKAMPDLSGYQIRV.

A compositionally biased stretch (low complexity) spans 1–33 (MPGGKKVVPSGSSSASPNAAATTTAAAAAAAAA). A disordered region spans residues 1–69 (MPGGKKVVPS…EEDLRDGGVP (69 aa)). Acidic residues predominate over residues 53–63 (EEPEEEGEEDL). Active-site residues include Cys-179, His-214, and Ser-231. Residues 309-375 (RDMRLKIGKG…PDLSGYQIRV (67 aa)) are disordered. Positions 329 to 375 (KKDVSSPQRAQSSPHRRNSRSERRPSGEKKPAEPKAMPDLSGYQIRV) are involved in heparin-binding and antiangiogenic activity. Positions 347–361 (SRSERRPSGEKKPAE) are enriched in basic and acidic residues.

The protein belongs to the transglutaminase-like superfamily. Vasohibin family. In terms of assembly, interacts with SVBP; interaction enhances VASH1 tyrosine carboxypeptidase activity. Post-translationally, ubiquitinated in vitro. As to expression, expressed at low level in proliferating endothelial cells at the sprouting front but highly expressed in nonproliferating endothelial cells in the termination zone.

The protein resides in the cytoplasm. It localises to the secreted. The catalysed reaction is C-terminal L-alpha-aminoacyl-L-glutamyl-L-glutamyl-L-tyrosyl-[tubulin] + H2O = C-terminal L-alpha-aminoacyl-L-glutamyl-L-glutamyl-[tubulin] + L-tyrosine. In terms of biological role, tyrosine carboxypeptidase that removes the C-terminal tyrosine residue of alpha-tubulin, thereby regulating microtubule dynamics and function. Acts as an angiogenesis inhibitor: inhibits migration, proliferation and network formation by endothelial cells as well as angiogenesis. This inhibitory effect is selective to endothelial cells as it does not affect the migration of smooth muscle cells or fibroblasts. The protein is Tubulinyl-Tyr carboxypeptidase 1 of Mus musculus (Mouse).